We begin with the raw amino-acid sequence, 1083 residues long: RecBCD enzyme subunit RecB (1083 aa).

The 323-residue stretch at 1–323 (MKVFDLLGPL…QTLGTNWRSD (323 aa)) folds into the UvrD-like helicase ATP-binding domain. The interval 1–704 (MKVFDLLGPL…RGRAPGEAIV (704 aa)) is DNA-binding and helicase activity, interacts with RecC. 21–28 (ASAGTGKT) contributes to the ATP binding site. One can recognise a UvrD-like helicase C-terminal domain in the interval 349-607 (VQARHQGHRL…QIMTVWVSKG (259 aa)). The tract at residues 765–1083 (AWKRTSYSGL…LSKLLDAEAP (319 aa)) is nuclease activity, interacts with RecD and RecA. Mg(2+) is bound by residues histidine 830, aspartate 962, and aspartate 975. Aspartate 975 functions as the For nuclease activity in the catalytic mechanism.

It belongs to the helicase family. UvrD subfamily. Heterotrimer of RecB, RecC and RecD. All subunits contribute to DNA-binding. Interacts with RecA. The cofactor is Mg(2+).

The catalysed reaction is Exonucleolytic cleavage (in the presence of ATP) in either 5'- to 3'- or 3'- to 5'-direction to yield 5'-phosphooligonucleotides.. It catalyses the reaction Couples ATP hydrolysis with the unwinding of duplex DNA by translocating in the 3'-5' direction.. The enzyme catalyses ATP + H2O = ADP + phosphate + H(+). A helicase/nuclease that prepares dsDNA breaks (DSB) for recombinational DNA repair. Binds to DSBs and unwinds DNA via a highly rapid and processive ATP-dependent bidirectional helicase activity. Holoenzyme degrades any linearized DNA that is unable to undergo homologous recombination. In the holoenzyme this subunit contributes DNA-dependent ATPase activity, exonuclease activity and 3'-5' helicase activity. Unlike the case in E.coli, suppresses RecA-dependent homologous recombination, is instead required for single-strand annealing pathway repair of DSB. This is RecBCD enzyme subunit RecB from Mycolicibacterium smegmatis (strain ATCC 700084 / mc(2)155) (Mycobacterium smegmatis).